Here is a 385-residue protein sequence, read N- to C-terminus: 8-amino-7-oxononanoate synthase (385 aa).

Arg-21 is a substrate binding site. A pyridoxal 5'-phosphate-binding site is contributed by 108–109; the sequence is GF. His-133 provides a ligand contact to substrate. 3 residues coordinate pyridoxal 5'-phosphate: Ser-179, His-207, and Thr-233. An N6-(pyridoxal phosphate)lysine modification is found at Lys-236. Residue Thr-352 coordinates substrate.

Belongs to the class-II pyridoxal-phosphate-dependent aminotransferase family. BioF subfamily. Homodimer. The cofactor is pyridoxal 5'-phosphate.

It catalyses the reaction 6-carboxyhexanoyl-[ACP] + L-alanine + H(+) = (8S)-8-amino-7-oxononanoate + holo-[ACP] + CO2. It participates in cofactor biosynthesis; biotin biosynthesis. Its function is as follows. Catalyzes the decarboxylative condensation of pimeloyl-[acyl-carrier protein] and L-alanine to produce 8-amino-7-oxononanoate (AON), [acyl-carrier protein], and carbon dioxide. The protein is 8-amino-7-oxononanoate synthase of Salmonella choleraesuis (strain SC-B67).